The following is a 374-amino-acid chain: NADH-quinone oxidoreductase subunit D 1 (374 aa).

It belongs to the complex I 49 kDa subunit family. In terms of assembly, NDH-1 is composed of 14 different subunits. Subunits NuoB, C, D, E, F, and G constitute the peripheral sector of the complex.

It localises to the cell membrane. It carries out the reaction a quinone + NADH + 5 H(+)(in) = a quinol + NAD(+) + 4 H(+)(out). Functionally, NDH-1 shuttles electrons from NADH, via FMN and iron-sulfur (Fe-S) centers, to quinones in the respiratory chain. The immediate electron acceptor for the enzyme in this species is believed to be ubiquinone. Couples the redox reaction to proton translocation (for every two electrons transferred, four hydrogen ions are translocated across the cytoplasmic membrane), and thus conserves the redox energy in a proton gradient. This Roseiflexus sp. (strain RS-1) protein is NADH-quinone oxidoreductase subunit D 1.